Reading from the N-terminus, the 229-residue chain is Urease accessory protein UreF (229 aa).

The protein belongs to the UreF family. As to quaternary structure, ureD, UreF and UreG form a complex that acts as a GTP-hydrolysis-dependent molecular chaperone, activating the urease apoprotein by helping to assemble the nickel containing metallocenter of UreC. The UreE protein probably delivers the nickel.

It is found in the cytoplasm. Required for maturation of urease via the functional incorporation of the urease nickel metallocenter. The chain is Urease accessory protein UreF from Corynebacterium efficiens (strain DSM 44549 / YS-314 / AJ 12310 / JCM 11189 / NBRC 100395).